A 295-amino-acid polypeptide reads, in one-letter code: Ribosomal RNA small subunit methyltransferase A (295 aa).

Positions 28, 30, 55, 76, 101, and 131 each coordinate S-adenosyl-L-methionine.

The protein belongs to the class I-like SAM-binding methyltransferase superfamily. rRNA adenine N(6)-methyltransferase family. RsmA subfamily.

It localises to the cytoplasm. It carries out the reaction adenosine(1518)/adenosine(1519) in 16S rRNA + 4 S-adenosyl-L-methionine = N(6)-dimethyladenosine(1518)/N(6)-dimethyladenosine(1519) in 16S rRNA + 4 S-adenosyl-L-homocysteine + 4 H(+). Functionally, specifically dimethylates two adjacent adenosines (A1518 and A1519) in the loop of a conserved hairpin near the 3'-end of 16S rRNA in the 30S particle. May play a critical role in biogenesis of 30S subunits. This chain is Ribosomal RNA small subunit methyltransferase A, found in Pelotomaculum thermopropionicum (strain DSM 13744 / JCM 10971 / SI).